The primary structure comprises 316 residues: Beta-galactosidase small subunit (316 aa).

This sequence belongs to the bacterial beta-galactosidase small subunit family. As to quaternary structure, heterodimer of a large (LacL) and a small subunit (LacM).

The catalysed reaction is Hydrolysis of terminal non-reducing beta-D-galactose residues in beta-D-galactosides.. Functionally, component of a beta-galactosidase. The protein is Beta-galactosidase small subunit (lacM) of Lactobacillus acidophilus (strain ATCC 700396 / NCK56 / N2 / NCFM).